The following is a 30-amino-acid chain: 136 kDa hydroxyproline-rich cell wall glycoprotein, major component (30 aa).

Residues Pro-8, Pro-9, Pro-10, Pro-11, Pro-12, Pro-17, Pro-18, Pro-19, Pro-20, Pro-26, Pro-27, Pro-28, and Pro-29 each carry the 4-hydroxyproline modification.

Post-translationally, O-glycosylated.

It is found in the secreted. Its subcellular location is the cell wall. This Phaseolus vulgaris (Kidney bean) protein is 136 kDa hydroxyproline-rich cell wall glycoprotein, major component.